A 63-amino-acid chain; its full sequence is Conotoxin TxMRCL-D012 (63 aa).

The N-terminal stretch at 1–19 is a signal peptide; that stretch reads MRCLPVFVILLLLIASTPS. A propeptide spanning residues 20-47 is cleaved from the precursor; it reads DTVPLKTKDDMPQASFHGNARRTLQMLS. Gln-50 carries the pyrrolidone carboxylic acid modification.

Belongs to the conotoxin T superfamily. In terms of processing, contains 2 disulfide bonds that can be either 'C1-C3, C2-C4' or 'C1-C4, C2-C3', since these disulfide connectivities have been observed for conotoxins with cysteine framework V (for examples, see AC P0DQQ7 and AC P81755). As to expression, expressed by the venom duct.

The protein localises to the secreted. This is Conotoxin TxMRCL-D012 from Conus textile (Cloth-of-gold cone).